We begin with the raw amino-acid sequence, 181 residues long: Crossover junction endodeoxyribonuclease RuvC (181 aa).

Active-site residues include Asp-7, Glu-67, and Asp-139. Residues Asp-7, Glu-67, and Asp-139 each contribute to the Mg(2+) site.

This sequence belongs to the RuvC family. In terms of assembly, homodimer which binds Holliday junction (HJ) DNA. The HJ becomes 2-fold symmetrical on binding to RuvC with unstacked arms; it has a different conformation from HJ DNA in complex with RuvA. In the full resolvosome a probable DNA-RuvA(4)-RuvB(12)-RuvC(2) complex forms which resolves the HJ. Mg(2+) is required as a cofactor.

Its subcellular location is the cytoplasm. It carries out the reaction Endonucleolytic cleavage at a junction such as a reciprocal single-stranded crossover between two homologous DNA duplexes (Holliday junction).. In terms of biological role, the RuvA-RuvB-RuvC complex processes Holliday junction (HJ) DNA during genetic recombination and DNA repair. Endonuclease that resolves HJ intermediates. Cleaves cruciform DNA by making single-stranded nicks across the HJ at symmetrical positions within the homologous arms, yielding a 5'-phosphate and a 3'-hydroxyl group; requires a central core of homology in the junction. The consensus cleavage sequence is 5'-(A/T)TT(C/G)-3'. Cleavage occurs on the 3'-side of the TT dinucleotide at the point of strand exchange. HJ branch migration catalyzed by RuvA-RuvB allows RuvC to scan DNA until it finds its consensus sequence, where it cleaves and resolves the cruciform DNA. The chain is Crossover junction endodeoxyribonuclease RuvC from Cupriavidus necator (strain ATCC 17699 / DSM 428 / KCTC 22496 / NCIMB 10442 / H16 / Stanier 337) (Ralstonia eutropha).